The primary structure comprises 205 residues: N-(5'-phosphoribosyl)anthranilate isomerase (205 aa).

This sequence belongs to the TrpF family.

The enzyme catalyses N-(5-phospho-beta-D-ribosyl)anthranilate = 1-(2-carboxyphenylamino)-1-deoxy-D-ribulose 5-phosphate. Its pathway is amino-acid biosynthesis; L-tryptophan biosynthesis; L-tryptophan from chorismate: step 3/5. The chain is N-(5'-phosphoribosyl)anthranilate isomerase from Acidithiobacillus ferrooxidans (strain ATCC 23270 / DSM 14882 / CIP 104768 / NCIMB 8455) (Ferrobacillus ferrooxidans (strain ATCC 23270)).